The sequence spans 248 residues: MTTGKLILLRHGQSEWNASNQFTGWVDVNLTEKGEAEAKRGGELLKAQGVLPSVVYTSLLRRAIRTANIALNAADRHWIPVVRDWRLNERHYGALQGLNKAETKEKYGDEQFMAWRRSYGTPPPELEDSSEFSQANDPRYANLDVVPRTECLKDVVERFVPYFKEEILPRVKNGETVLIAAHGNSLRALVKHLDNISDADIAELNIPTGIPLVYELDEAGTVLNPGGTYLDPEAAAAGAAAVAAQGAK.

Substrate-binding positions include 10-17, 23-24, Arg62, 89-92, Lys100, 116-117, and 183-184; these read RHGQSEWN, TG, ERHY, RR, and GN. His11 serves as the catalytic Tele-phosphohistidine intermediate. The active-site Proton donor/acceptor is Glu89.

This sequence belongs to the phosphoglycerate mutase family. BPG-dependent PGAM subfamily.

The enzyme catalyses (2R)-2-phosphoglycerate = (2R)-3-phosphoglycerate. The protein operates within carbohydrate degradation; glycolysis; pyruvate from D-glyceraldehyde 3-phosphate: step 3/5. In terms of biological role, catalyzes the interconversion of 2-phosphoglycerate and 3-phosphoglycerate. The protein is 2,3-bisphosphoglycerate-dependent phosphoglycerate mutase of Corynebacterium diphtheriae (strain ATCC 700971 / NCTC 13129 / Biotype gravis).